A 377-amino-acid polypeptide reads, in one-letter code: Pseudouridylate synthase RPUSD4, mitochondrial (377 aa).

A mitochondrion-targeting transit peptide spans 1 to 15 (MAAPRWSASGPWIRG). Residues 36–62 (AASTAINAQRLAEKLRAQKREQDTKKE) adopt a coiled-coil conformation. Aspartate 153 is an active-site residue.

It belongs to the pseudouridine synthase RluA family. In terms of assembly, interacts with 16S mt-rRNA, mt-tRNA(Phe) and mt-tRNA(Met). Forms a regulatory protein-RNA complex, consisting of RCC1L, NGRN, RPUSD3, RPUSD4, TRUB2, FASTKD2 and 16S mt-rRNA.

It localises to the mitochondrion matrix. Its subcellular location is the nucleus. The protein resides in the cytoplasm. The catalysed reaction is uridine in 5S rRNA = pseudouridine in 5S rRNA. The enzyme catalyses a uridine in tRNA = a pseudouridine in tRNA. It carries out the reaction a uridine in mRNA = a pseudouridine in mRNA. In terms of biological role, catalyzes uridine to pseudouridine isomerization (pseudouridylation) of different mitochondrial RNA substrates. Acts on position 1397 in 16S mitochondrial ribosomal RNA (16S mt-rRNA). This modification is required for the assembly of 16S mt-rRNA into a functional mitochondrial ribosome. As a component of a functional protein-RNA module, consisting of RCC1L, NGRN, RPUSD3, RPUSD4, TRUB2, FASTKD2 and 16S mt-rRNA, controls 16S mt-rRNA abundance and is required for intra-mitochondrial translation. Acts on position 39 in mitochondrial tRNA(Phe). Also catalyzes pseudouridylation of mRNAs in nucleus: acts as a regulator of pre-mRNA splicing by mediating pseudouridylation of pre-mRNAs at locations associated with alternatively spliced regions. Pseudouridylation of pre-mRNAs near splice sites directly regulates mRNA splicing and mRNA 3'-end processing. In Homo sapiens (Human), this protein is Pseudouridylate synthase RPUSD4, mitochondrial.